A 418-amino-acid polypeptide reads, in one-letter code: Glutamyl-tRNA reductase (418 aa).

Residues threonine 49–arginine 52, serine 109, glutamate 114–glutamine 116, and glutamine 120 each bind substrate. The Nucleophile role is filled by cysteine 50. Glycine 189–isoleucine 194 serves as a coordination point for NADP(+).

This sequence belongs to the glutamyl-tRNA reductase family. In terms of assembly, homodimer.

It carries out the reaction (S)-4-amino-5-oxopentanoate + tRNA(Glu) + NADP(+) = L-glutamyl-tRNA(Glu) + NADPH + H(+). The protein operates within porphyrin-containing compound metabolism; protoporphyrin-IX biosynthesis; 5-aminolevulinate from L-glutamyl-tRNA(Glu): step 1/2. Its function is as follows. Catalyzes the NADPH-dependent reduction of glutamyl-tRNA(Glu) to glutamate 1-semialdehyde (GSA). The protein is Glutamyl-tRNA reductase of Salmonella dublin (strain CT_02021853).